A 134-amino-acid polypeptide reads, in one-letter code: Inner membrane protein YqjE (134 aa).

Topologically, residues 1–55 (MADTHHAQGPGKSVLGIGQRIVSIMVEMVETRLRLAVVELEEEKANLFQLLLMLG) are cytoplasmic. The helical transmembrane segment at 56 to 76 (LTMLFAAFGLMSLMVLIIWAV) threads the bilayer. Residues 77–83 (DPQYRLN) lie on the Periplasmic side of the membrane. The helical transmembrane segment at 84 to 104 (AMIATTVVLLLLALIGGIWTL) threads the bilayer. The Cytoplasmic portion of the chain corresponds to 105–134 (RKSRKSTLLRHTRHELANDRQLLEEESREQ).

The protein resides in the cell inner membrane. This Escherichia coli O157:H7 protein is Inner membrane protein YqjE (yqjE).